Here is a 175-residue protein sequence, read N- to C-terminus: Flagellar assembly factor FliW (175 aa).

The protein belongs to the FliW family. Interacts with translational regulator CsrA and flagellin(s).

The protein resides in the cytoplasm. In terms of biological role, acts as an anti-CsrA protein, binds CsrA and prevents it from repressing translation of its target genes, one of which is flagellin. Binds to flagellin and participates in the assembly of the flagellum. In Bdellovibrio bacteriovorus (strain ATCC 15356 / DSM 50701 / NCIMB 9529 / HD100), this protein is Flagellar assembly factor FliW.